Here is a 124-residue protein sequence, read N- to C-terminus: uncharacterized protein (124 aa).

Residues 1–18 (MHIIKTLISVGVAFSLSA) form the signal peptide. Cys-19 carries N-palmitoyl cysteine lipidation. Cys-19 carries S-diacylglycerol cysteine lipidation.

Its subcellular location is the cell membrane. This is an uncharacterized protein from Pasteurella multocida (strain Pm70).